The sequence spans 343 residues: MLTNRQLLILQVIVNDFIRSAQPVGSRTLSKKEDITFSSATIRNEMADLEELGFIEKTHSSSGRIPSEKGYRYYVDHLLSPGKLSKTDLNIIHSIFKEKIFELEKAVQKSAQVLSDLTNYTSIVLGPRLSENHLKQIQIVPIQPKKAVAILVTNTGHVENKTINFPAEVDLSDLEKLVNILNERLRGVPISELKDRIFKEVVIFLKSHIQNYDTILHALGATLDSSVQTDRLFFGGKINMLNQPEFHDIDRVKSLLSLIEKEQEILRLFQSTESGITIKIGKENDYEEMENCSLITATYTVGSKQIGSIAVIGPTRMDYSRVVGLLQHVSSDLSKALTSLYDG.

Belongs to the HrcA family.

Functionally, negative regulator of class I heat shock genes (grpE-dnaK-dnaJ and groELS operons). Prevents heat-shock induction of these operons. This chain is Heat-inducible transcription repressor HrcA, found in Bacillus licheniformis (strain ATCC 14580 / DSM 13 / JCM 2505 / CCUG 7422 / NBRC 12200 / NCIMB 9375 / NCTC 10341 / NRRL NRS-1264 / Gibson 46).